Reading from the N-terminus, the 514-residue chain is Peptide chain release factor 3 (514 aa).

One can recognise a tr-type G domain in the interval 8–268 (KKRRTFAIIS…TFLKFAPEPH (261 aa)). Residues 17–24 (SHPDAGKT), 85–89 (DTPGH), and 139–142 (NKLD) each bind GTP.

The protein belongs to the TRAFAC class translation factor GTPase superfamily. Classic translation factor GTPase family. PrfC subfamily.

The protein resides in the cytoplasm. Increases the formation of ribosomal termination complexes and stimulates activities of RF-1 and RF-2. It binds guanine nucleotides and has strong preference for UGA stop codons. It may interact directly with the ribosome. The stimulation of RF-1 and RF-2 is significantly reduced by GTP and GDP, but not by GMP. The protein is Peptide chain release factor 3 of Streptococcus thermophilus (strain ATCC BAA-491 / LMD-9).